The chain runs to 147 residues: 3-dehydroquinate dehydratase (147 aa).

The active-site Proton acceptor is the Y23. N74, H80, and D87 together coordinate substrate. H100 (proton donor) is an active-site residue. Substrate contacts are provided by residues 101-102 and R111; that span reads LS.

The protein belongs to the type-II 3-dehydroquinase family. Homododecamer.

The catalysed reaction is 3-dehydroquinate = 3-dehydroshikimate + H2O. It functions in the pathway metabolic intermediate biosynthesis; chorismate biosynthesis; chorismate from D-erythrose 4-phosphate and phosphoenolpyruvate: step 3/7. Functionally, catalyzes a trans-dehydration via an enolate intermediate. This Clostridium botulinum (strain Kyoto / Type A2) protein is 3-dehydroquinate dehydratase.